We begin with the raw amino-acid sequence, 231 residues long: MRLVIARCSVDYVGRLKAHLPLATRLLLVKADGSVLVHSDGGSYKPLNWMSPPATLRVSSPEDVDLELGVAEQWTVQSAKTDDRLIINIHEKLSETSHDLGVDPGLIKDGVEADLQRLLADQIETLGTGYSLIRREYFTAIGPVDILARDGDGATVAIELKRRGDIDGVEQLTRYLELLNRDPLLAPVRGIFAAQQIKPQAKVLANDRGIDCVTLDYDAMRGVDDSESRLF.

It belongs to the NucS endonuclease family.

The protein localises to the cytoplasm. Cleaves both 3' and 5' ssDNA extremities of branched DNA structures. This chain is Endonuclease NucS, found in Pseudarthrobacter chlorophenolicus (strain ATCC 700700 / DSM 12829 / CIP 107037 / JCM 12360 / KCTC 9906 / NCIMB 13794 / A6) (Arthrobacter chlorophenolicus).